The chain runs to 59 residues: Ribosome biogenesis protein Nop10 (59 aa).

It belongs to the NOP10 family.

Functionally, involved in ribosome biogenesis; more specifically in 18S rRNA pseudouridylation and in cleavage of pre-rRNA. The sequence is that of Ribosome biogenesis protein Nop10 from Thermococcus gammatolerans (strain DSM 15229 / JCM 11827 / EJ3).